The primary structure comprises 2564 residues: Spectrin beta chain, non-erythrocytic 4 (2564 aa).

The tract at residues 1-37 (MAQVPGEVDNMEGLPAPNNNPAARWESPDRGWEREQP) is disordered. Residues 1 to 282 (MAQVPGEVDN…IITYVVSFYH (282 aa)) form an actin-binding region. A compositionally biased stretch (basic and acidic residues) spans 26-36 (ESPDRGWEREQ). 2 consecutive Calponin-homology (CH) domains span residues 61 to 165 (AVQK…LRFQ) and 180 to 285 (RSAK…HYFS). Spectrin repeat units follow at residues 311–418 (IERY…AALR), 430–533 (LAQR…RLEQ), 536–641 (ALQK…AELE), 774–879 (ALHQ…WLRD), 884–982 (YRMF…RKEE), 1089–1196 (RLQR…EALV), 1306–1407 (ELQH…RQLF), 1412–1512 (ADQL…RLLL), 1515–1617 (KELH…QQVL), 1623–1725 (VEQY…ALEQ), 1728–1830 (WLYQ…AQLL), 1835–1935 (ELHK…EDAR), 1944–2046 (ALRF…WLQQ), and 2049–2123 (EVHQ…QSKQ). The tract at residues 1853–1872 (KRRRLPRLTTPPEPRPSASS) is disordered. Positions 2208–2225 (PAAPEDAAETPATPAAAE) are enriched in low complexity. 2 disordered regions span residues 2208–2439 (PAAP…KSSN) and 2533–2564 (ARWGQTLPTTSSTDEGNPKREGGDRRASGRRK). Basic and acidic residues-rich tracts occupy residues 2227 to 2254 (VRPRPERQESADRAEELPRRRRPERQES), 2268 to 2278 (ERQESAEHEAA), and 2287 to 2318 (EQMERRRERRERRLERQESSEQEMPIRGDLVK). Positions 2343-2355 (PSLPQPRELPPGR) are enriched in pro residues. Composition is skewed to basic and acidic residues over residues 2362-2377 (LPERTPRPDRPRARDR) and 2424-2435 (FLLRKRELDANR). The PH domain occupies 2418-2527 (TVQHEGFLLR…WLEAVASSVA (110 aa)). The span at 2538 to 2547 (TLPTTSSTDE) shows a compositional bias: polar residues. Residues 2548-2564 (GNPKREGGDRRASGRRK) show a composition bias toward basic and acidic residues.

The protein belongs to the spectrin family. As to expression, expressed in skeletal muscle at the sarcolemma and in the muscle capillaries (at protein level). Abundantly expressed in brain and pancreatic islets.

It is found in the cytoplasm. The protein resides in the cytoskeleton. The protein localises to the cell cortex. The polypeptide is Spectrin beta chain, non-erythrocytic 4 (SPTBN4) (Homo sapiens (Human)).